The sequence spans 292 residues: Transforming growth factor-beta receptor type 3-like protein (292 aa).

A signal peptide spans 1–16 (MLGTVLLLALLPGITT). Residues 17-170 (LPSGPPAPPF…APAPLTPPPP (154 aa)) enclose the ZP; truncated domain. Residues 17–244 (LPSGPPAPPF…PAPAALEPAP (228 aa)) lie on the Extracellular side of the membrane. Cys-85 and Cys-147 are joined by a disulfide. The disordered stretch occupies residues 160–236 (RAPAPLTPPP…AVRPEPPAPA (77 aa)). Composition is skewed to pro residues over residues 164–175 (PLTPPPPPPPSR) and 213–222 (PRPPPRPPKS). Residues 245 to 265 (VVALVLAAFVLGAALAAGLGL) traverse the membrane as a helical segment. Residues 266–292 (VCAHSAPHAPGPPARASPSGPQPRRSQ) are Cytoplasmic-facing. The segment at 273–292 (HAPGPPARASPSGPQPRRSQ) is disordered. A compositionally biased stretch (low complexity) spans 281 to 292 (ASPSGPQPRRSQ).

Glycosylated. Expressed in pituitary gland gonadotrope cells.

The protein localises to the cell membrane. Its function is as follows. Expressed in gonadotrope cells, acts as an inhibin B coreceptor and regulates follicle-stimulating hormone (FSH) levels and female fertility. The chain is Transforming growth factor-beta receptor type 3-like protein from Homo sapiens (Human).